We begin with the raw amino-acid sequence, 322 residues long: Undecaprenyl-phosphate 4-deoxy-4-formamido-L-arabinose transferase (322 aa).

The Cytoplasmic portion of the chain corresponds to 1–235 (MFEIHPVKKV…TCLTTTPLRM (235 aa)). Residues 236–256 (LSLLGSIIAIGGFSIAVLLVI) form a helical membrane-spanning segment. The Periplasmic segment spans residues 257–269 (LRLTFGPQWAAEG). Residues 270–290 (VFMLFAVLFTFIGAQFIGMGL) traverse the membrane as a helical segment. Over 291 to 322 (LGEYIGRIYTDVRARPRYFVQQVIRPSSKENE) the chain is Cytoplasmic.

It belongs to the glycosyltransferase 2 family.

It localises to the cell inner membrane. The enzyme catalyses UDP-4-deoxy-4-formamido-beta-L-arabinose + di-trans,octa-cis-undecaprenyl phosphate = 4-deoxy-4-formamido-alpha-L-arabinopyranosyl di-trans,octa-cis-undecaprenyl phosphate + UDP. It functions in the pathway glycolipid biosynthesis; 4-amino-4-deoxy-alpha-L-arabinose undecaprenyl phosphate biosynthesis; 4-amino-4-deoxy-alpha-L-arabinose undecaprenyl phosphate from UDP-4-deoxy-4-formamido-beta-L-arabinose and undecaprenyl phosphate: step 1/2. The protein operates within bacterial outer membrane biogenesis; lipopolysaccharide biosynthesis. In terms of biological role, catalyzes the transfer of 4-deoxy-4-formamido-L-arabinose from UDP to undecaprenyl phosphate. The modified arabinose is attached to lipid A and is required for resistance to polymyxin and cationic antimicrobial peptides. The protein is Undecaprenyl-phosphate 4-deoxy-4-formamido-L-arabinose transferase of Escherichia coli O7:K1 (strain IAI39 / ExPEC).